The primary structure comprises 180 residues: UPF0149 protein XC_0904 (180 aa).

The protein belongs to the UPF0149 family.

The protein is UPF0149 protein XC_0904 of Xanthomonas campestris pv. campestris (strain 8004).